Reading from the N-terminus, the 185-residue chain is Photosystem I assembly protein Ycf4 (185 aa).

The next 2 helical transmembrane spans lie at 21–43 (NFCW…TSSY) and 63–85 (GLVM…CTIL).

This sequence belongs to the Ycf4 family.

Its subcellular location is the plastid. The protein localises to the chloroplast thylakoid membrane. Its function is as follows. Seems to be required for the assembly of the photosystem I complex. This is Photosystem I assembly protein Ycf4 from Brassica oleracea (Wild cabbage).